The following is a 306-amino-acid chain: Acetyl-coenzyme A carboxylase carboxyl transferase subunit beta (306 aa).

The 270-residue stretch at 27-296 folds into the CoA carboxyltransferase N-terminal domain; that stretch reads LWHKCPSCEA…PRFVAPVIEP (270 aa). Residues Cys31, Cys34, Cys50, and Cys53 each coordinate Zn(2+). Residues 31–53 form a C4-type zinc finger; sequence CPSCEAVLYRPELEKTLDVCPKC.

It belongs to the AccD/PCCB family. In terms of assembly, acetyl-CoA carboxylase is a heterohexamer composed of biotin carboxyl carrier protein (AccB), biotin carboxylase (AccC) and two subunits each of ACCase subunit alpha (AccA) and ACCase subunit beta (AccD). Zn(2+) serves as cofactor.

It is found in the cytoplasm. The catalysed reaction is N(6)-carboxybiotinyl-L-lysyl-[protein] + acetyl-CoA = N(6)-biotinyl-L-lysyl-[protein] + malonyl-CoA. The protein operates within lipid metabolism; malonyl-CoA biosynthesis; malonyl-CoA from acetyl-CoA: step 1/1. In terms of biological role, component of the acetyl coenzyme A carboxylase (ACC) complex. Biotin carboxylase (BC) catalyzes the carboxylation of biotin on its carrier protein (BCCP) and then the CO(2) group is transferred by the transcarboxylase to acetyl-CoA to form malonyl-CoA. The polypeptide is Acetyl-coenzyme A carboxylase carboxyl transferase subunit beta (Pseudomonas savastanoi pv. phaseolicola (strain 1448A / Race 6) (Pseudomonas syringae pv. phaseolicola (strain 1448A / Race 6))).